A 322-amino-acid polypeptide reads, in one-letter code: Phosphatidylserine decarboxylase proenzyme (322 aa).

Active-site charge relay system; for autoendoproteolytic cleavage activity residues include Asp90, His147, and Ser254. The Schiff-base intermediate with substrate; via pyruvic acid; for decarboxylase activity role is filled by Ser254. Residue Ser254 is modified to Pyruvic acid (Ser); by autocatalysis. The tract at residues 297-322 (PAPLPAEEIKAEHDASPLVDNKKDDT) is disordered. Residues 303–322 (EEIKAEHDASPLVDNKKDDT) show a composition bias toward basic and acidic residues.

Belongs to the phosphatidylserine decarboxylase family. PSD-B subfamily. Prokaryotic type I sub-subfamily. As to quaternary structure, heterodimer of a large membrane-associated beta subunit and a small pyruvoyl-containing alpha subunit. Pyruvate serves as cofactor. In terms of processing, is synthesized initially as an inactive proenzyme. Formation of the active enzyme involves a self-maturation process in which the active site pyruvoyl group is generated from an internal serine residue via an autocatalytic post-translational modification. Two non-identical subunits are generated from the proenzyme in this reaction, and the pyruvate is formed at the N-terminus of the alpha chain, which is derived from the carboxyl end of the proenzyme. The autoendoproteolytic cleavage occurs by a canonical serine protease mechanism, in which the side chain hydroxyl group of the serine supplies its oxygen atom to form the C-terminus of the beta chain, while the remainder of the serine residue undergoes an oxidative deamination to produce ammonia and the pyruvoyl prosthetic group on the alpha chain. During this reaction, the Ser that is part of the protease active site of the proenzyme becomes the pyruvoyl prosthetic group, which constitutes an essential element of the active site of the mature decarboxylase.

The protein resides in the cell membrane. It catalyses the reaction a 1,2-diacyl-sn-glycero-3-phospho-L-serine + H(+) = a 1,2-diacyl-sn-glycero-3-phosphoethanolamine + CO2. The protein operates within phospholipid metabolism; phosphatidylethanolamine biosynthesis; phosphatidylethanolamine from CDP-diacylglycerol: step 2/2. Catalyzes the formation of phosphatidylethanolamine (PtdEtn) from phosphatidylserine (PtdSer). The polypeptide is Phosphatidylserine decarboxylase proenzyme (Salmonella typhi).